The following is a 287-amino-acid chain: ATP synthase gamma chain (287 aa).

This sequence belongs to the ATPase gamma chain family. F-type ATPases have 2 components, CF(1) - the catalytic core - and CF(0) - the membrane proton channel. CF(1) has five subunits: alpha(3), beta(3), gamma(1), delta(1), epsilon(1). CF(0) has three main subunits: a, b and c.

Its subcellular location is the cell inner membrane. In terms of biological role, produces ATP from ADP in the presence of a proton gradient across the membrane. The gamma chain is believed to be important in regulating ATPase activity and the flow of protons through the CF(0) complex. The polypeptide is ATP synthase gamma chain (Salmonella paratyphi A (strain ATCC 9150 / SARB42)).